We begin with the raw amino-acid sequence, 380 residues long: Chaperone protein DnaJ (380 aa).

Residues 5–70 enclose the J domain; sequence DFYDVLGVNR…QKRAAYDQYG (66 aa). Residues 139–217 form a CR-type zinc finger; that stretch reads GCEKQIRIPT…CHGAGRVKSQ (79 aa). Zn(2+)-binding residues include cysteine 152, cysteine 155, cysteine 169, cysteine 172, cysteine 191, cysteine 194, cysteine 205, and cysteine 208. CXXCXGXG motif repeat units follow at residues 152 to 159, 169 to 176, 191 to 198, and 205 to 212; these read CSHCHGSG, CPTCGGAG, CPTCHGSG, and CNICHGAG.

Belongs to the DnaJ family. As to quaternary structure, homodimer. Zn(2+) is required as a cofactor.

It is found in the cytoplasm. Its function is as follows. Participates actively in the response to hyperosmotic and heat shock by preventing the aggregation of stress-denatured proteins and by disaggregating proteins, also in an autonomous, DnaK-independent fashion. Unfolded proteins bind initially to DnaJ; upon interaction with the DnaJ-bound protein, DnaK hydrolyzes its bound ATP, resulting in the formation of a stable complex. GrpE releases ADP from DnaK; ATP binding to DnaK triggers the release of the substrate protein, thus completing the reaction cycle. Several rounds of ATP-dependent interactions between DnaJ, DnaK and GrpE are required for fully efficient folding. Also involved, together with DnaK and GrpE, in the DNA replication of plasmids through activation of initiation proteins. This chain is Chaperone protein DnaJ, found in Laribacter hongkongensis (strain HLHK9).